We begin with the raw amino-acid sequence, 210 residues long: Ribosomal RNA large subunit methyltransferase E (210 aa).

S-adenosyl-L-methionine-binding residues include glycine 64, tryptophan 66, aspartate 84, asparagine 100, and aspartate 125. Lysine 165 acts as the Proton acceptor in catalysis.

This sequence belongs to the class I-like SAM-binding methyltransferase superfamily. RNA methyltransferase RlmE family.

The protein localises to the cytoplasm. The catalysed reaction is uridine(2552) in 23S rRNA + S-adenosyl-L-methionine = 2'-O-methyluridine(2552) in 23S rRNA + S-adenosyl-L-homocysteine + H(+). Its function is as follows. Specifically methylates the uridine in position 2552 of 23S rRNA at the 2'-O position of the ribose in the fully assembled 50S ribosomal subunit. This chain is Ribosomal RNA large subunit methyltransferase E, found in Buchnera aphidicola subsp. Baizongia pistaciae (strain Bp).